Reading from the N-terminus, the 318-residue chain is 2-keto-3-deoxygluconate permease (318 aa).

Transmembrane regions (helical) follow at residues 10 to 30, 42 to 62, 82 to 102, 109 to 129, 139 to 159, 163 to 183, 201 to 221, 224 to 244, 257 to 277, and 289 to 309; these read LPGG…TLWP, GLIS…GATI, IAVA…GGVS, LSVL…YAAL, AGAV…LILG, LASF…LGFA, TLVP…TIAH, TSGV…LLLA, VAAS…AGMA, and ALVA…TALY.

Belongs to the KdgT transporter family.

The protein resides in the cell inner membrane. It carries out the reaction 2-dehydro-3-deoxy-D-gluconate(in) + H(+)(in) = 2-dehydro-3-deoxy-D-gluconate(out) + H(+)(out). Functionally, catalyzes the proton-dependent uptake of 2-keto-3-deoxygluconate (KDG) into the cell. The polypeptide is 2-keto-3-deoxygluconate permease (Xanthomonas axonopodis pv. citri (strain 306)).